The chain runs to 211 residues: ATP-dependent dethiobiotin synthetase BioD 2 (211 aa).

13–18 (DIGKTI) contacts ATP. Mg(2+) is bound at residue Thr17. Residue Lys38 is part of the active site. Thr42 serves as a coordination point for substrate. Residues Asp50, 115 to 118 (EGAG), and 175 to 176 (NT) each bind ATP. 2 residues coordinate Mg(2+): Asp50 and Glu115.

Belongs to the dethiobiotin synthetase family. As to quaternary structure, homodimer. It depends on Mg(2+) as a cofactor.

The protein resides in the cytoplasm. The enzyme catalyses (7R,8S)-7,8-diammoniononanoate + CO2 + ATP = (4R,5S)-dethiobiotin + ADP + phosphate + 3 H(+). Its pathway is cofactor biosynthesis; biotin biosynthesis; biotin from 7,8-diaminononanoate: step 1/2. Catalyzes a mechanistically unusual reaction, the ATP-dependent insertion of CO2 between the N7 and N8 nitrogen atoms of 7,8-diaminopelargonic acid (DAPA, also called 7,8-diammoniononanoate) to form a ureido ring. The chain is ATP-dependent dethiobiotin synthetase BioD 2 from Haemophilus ducreyi (strain 35000HP / ATCC 700724).